A 178-amino-acid polypeptide reads, in one-letter code: uncharacterized protein (178 aa).

This is an uncharacterized protein from Saccharolobus islandicus (Sulfolobus islandicus).